A 101-amino-acid polypeptide reads, in one-letter code: NADH-quinone oxidoreductase subunit K (101 aa).

Helical transmembrane passes span 4–24, 30–50, and 65–85; these read LEHY…GIFL, IVIL…LVAF, and FVLT…VTFF.

This sequence belongs to the complex I subunit 4L family. In terms of assembly, NDH-1 is composed of 14 different subunits. Subunits NuoA, H, J, K, L, M, N constitute the membrane sector of the complex.

The protein localises to the cell inner membrane. The enzyme catalyses a quinone + NADH + 5 H(+)(in) = a quinol + NAD(+) + 4 H(+)(out). Functionally, NDH-1 shuttles electrons from NADH, via FMN and iron-sulfur (Fe-S) centers, to quinones in the respiratory chain. The immediate electron acceptor for the enzyme in this species is believed to be ubiquinone. Couples the redox reaction to proton translocation (for every two electrons transferred, four hydrogen ions are translocated across the cytoplasmic membrane), and thus conserves the redox energy in a proton gradient. The protein is NADH-quinone oxidoreductase subunit K of Cereibacter sphaeroides (strain ATCC 17029 / ATH 2.4.9) (Rhodobacter sphaeroides).